The sequence spans 312 residues: Ribosomal protein L11 methyltransferase (312 aa).

Residues threonine 162, glycine 183, aspartate 205, and asparagine 248 each contribute to the S-adenosyl-L-methionine site.

The protein belongs to the methyltransferase superfamily. PrmA family.

It localises to the cytoplasm. It carries out the reaction L-lysyl-[protein] + 3 S-adenosyl-L-methionine = N(6),N(6),N(6)-trimethyl-L-lysyl-[protein] + 3 S-adenosyl-L-homocysteine + 3 H(+). Its function is as follows. Methylates ribosomal protein L11. The chain is Ribosomal protein L11 methyltransferase from Bacillus cytotoxicus (strain DSM 22905 / CIP 110041 / 391-98 / NVH 391-98).